A 448-amino-acid polypeptide reads, in one-letter code: MREIVHLQTGQCGNQVGAAFWQTISSEHGLDESGLCNASSDQQLERMNVYFNEVGNSKYVPRAVLVDLEPGTMDAIRSGPHGALFRPDNFVFGQSSAGNNWAKGHYTEGAELVDQVIDVVRREAESCDYLQGFQITHSLGGGTGAGMGTLLISKIREEFPDRMMATFSVLPSPKVSDTVVEPYNATLSVHQLVEHADETFCIDNEALYDICTRTLKLSSPSYGDLNHLVSTVMSGITASFRFPGQLNSDLRKLAVNMVPFPRLHFFMVGFAPLTSRGAQSFRAMSVPELTQQMFDSRNMMTACNFQNGRFLTCSALFRGKISMKEVDDQMLSIHTKNSGYFVEWIPNNVQTALCSVPPKGLKMSATFVGNSTSVQELFQRVATQFTAMFRRKAFLHWYTGEGMDEMEFTEAESNMNDLMSEYQQYQEASISDGEEQPYAEEAAYEAEE.

GTP is bound by residues glutamine 11, glutamate 69, serine 138, glycine 142, threonine 143, glycine 144, asparagine 204, and asparagine 226. Residue glutamate 69 participates in Mg(2+) binding. Residues 429-448 (SISDGEEQPYAEEAAYEAEE) are disordered. A compositionally biased stretch (acidic residues) spans 432–448 (DGEEQPYAEEAAYEAEE).

It belongs to the tubulin family. As to quaternary structure, dimer of alpha and beta chains. A typical microtubule is a hollow water-filled tube with an outer diameter of 25 nm and an inner diameter of 15 nM. Alpha-beta heterodimers associate head-to-tail to form protofilaments running lengthwise along the microtubule wall with the beta-tubulin subunit facing the microtubule plus end conferring a structural polarity. Microtubules usually have 13 protofilaments but different protofilament numbers can be found in some organisms and specialized cells. It depends on Mg(2+) as a cofactor.

It is found in the cytoplasm. Its subcellular location is the cytoskeleton. Tubulin is the major constituent of microtubules, a cylinder consisting of laterally associated linear protofilaments composed of alpha- and beta-tubulin heterodimers. Microtubules grow by the addition of GTP-tubulin dimers to the microtubule end, where a stabilizing cap forms. Below the cap, tubulin dimers are in GDP-bound state, owing to GTPase activity of alpha-tubulin. This Aspergillus fumigatus (strain ATCC MYA-4609 / CBS 101355 / FGSC A1100 / Af293) (Neosartorya fumigata) protein is Tubulin beta chain.